The chain runs to 358 residues: Photosystem II protein D1 2 (358 aa).

3 helical membrane passes run 28-45 (YVGW…AATI), 117-132 (HFLI…QWEL), and 141-155 (WICV…AAMV). Residue histidine 117 coordinates chlorophyll a. Tyrosine 125 is a pheophytin a binding site. Residues aspartate 169 and glutamate 188 each contribute to the [CaMn4O5] cluster site. Residues 196–217 (FHMLGVAGVFGGSLFSAMHGSL) form a helical membrane-spanning segment. A chlorophyll a-binding site is contributed by histidine 197. Residues histidine 214 and 263 to 264 (SF) contribute to the a quinone site. Fe cation is bound at residue histidine 214. Fe cation is bound at residue histidine 271. A helical transmembrane segment spans residues 273 to 287 (FLAAWPVVGIWFTSM). The [CaMn4O5] cluster site is built by histidine 331, glutamate 332, aspartate 341, and alanine 343. Residues 344-358 (TTESAPVALQAPAVG) constitute a propeptide that is removed on maturation.

Belongs to the reaction center PufL/M/PsbA/D family. As to quaternary structure, PSII is composed of 1 copy each of membrane proteins PsbA, PsbB, PsbC, PsbD, PsbE, PsbF, PsbH, PsbI, PsbJ, PsbK, PsbL, PsbM, PsbT, PsbX, PsbY, PsbZ, Psb30/Ycf12, peripheral proteins PsbO, CyanoQ (PsbQ), PsbU, PsbV and a large number of cofactors. It forms dimeric complexes. The cofactor is The D1/D2 heterodimer binds P680, chlorophylls that are the primary electron donor of PSII, and subsequent electron acceptors. It shares a non-heme iron and each subunit binds pheophytin, quinone, additional chlorophylls, carotenoids and lipids. D1 provides most of the ligands for the Mn4-Ca-O5 cluster of the oxygen-evolving complex (OEC). There is also a Cl(-1) ion associated with D1 and D2, which is required for oxygen evolution. The PSII complex binds additional chlorophylls, carotenoids and specific lipids.. In terms of processing, tyr-160 forms a radical intermediate that is referred to as redox-active TyrZ, YZ or Y-Z. Post-translationally, C-terminally processed by CtpA; processing is essential to allow assembly of the oxygen-evolving complex and thus photosynthetic growth.

Its subcellular location is the cellular thylakoid membrane. It catalyses the reaction 2 a plastoquinone + 4 hnu + 2 H2O = 2 a plastoquinol + O2. Photosystem II (PSII) is a light-driven water:plastoquinone oxidoreductase that uses light energy to abstract electrons from H(2)O, generating O(2) and a proton gradient subsequently used for ATP formation. It consists of a core antenna complex that captures photons, and an electron transfer chain that converts photonic excitation into a charge separation. The D1/D2 (PsbA/PsbD) reaction center heterodimer binds P680, the primary electron donor of PSII as well as several subsequent electron acceptors. This chain is Photosystem II protein D1 2, found in Synechococcus sp. (strain RCC307).